The sequence spans 111 residues: Small ribosomal subunit protein bS18 (111 aa).

The interval 1–32 (MDLENTENVENNNNNEEEVKAKGERKAHFNKE) is disordered. The span at 17–32 (EEVKAKGERKAHFNKE) shows a compositional bias: basic and acidic residues.

Belongs to the bacterial ribosomal protein bS18 family. Part of the 30S ribosomal subunit. Forms a tight heterodimer with protein bS6.

Its function is as follows. Binds as a heterodimer with protein bS6 to the central domain of the 16S rRNA, where it helps stabilize the platform of the 30S subunit. This chain is Small ribosomal subunit protein bS18, found in Brachyspira hyodysenteriae (strain ATCC 49526 / WA1).